A 458-amino-acid polypeptide reads, in one-letter code: tRNA modification GTPase MnmE (458 aa).

(6S)-5-formyl-5,6,7,8-tetrahydrofolate is bound by residues Arg-22, Glu-84, and Arg-123. Residues 220–379 form the TrmE-type G domain; sequence GIATAIIGRP…LEKAIADLFF (160 aa). Asn-230 provides a ligand contact to K(+). GTP is bound by residues 230 to 235, 249 to 255, and 274 to 277; these read NVGKSS, TDIAGTT, and DTAG. Ser-234 provides a ligand contact to Mg(2+). Residues Thr-249, Ile-251, and Thr-254 each contribute to the K(+) site. Thr-255 contacts Mg(2+). (6S)-5-formyl-5,6,7,8-tetrahydrofolate is bound at residue Lys-458.

The protein belongs to the TRAFAC class TrmE-Era-EngA-EngB-Septin-like GTPase superfamily. TrmE GTPase family. In terms of assembly, homodimer. Heterotetramer of two MnmE and two MnmG subunits. Requires K(+) as cofactor.

It localises to the cytoplasm. Its function is as follows. Exhibits a very high intrinsic GTPase hydrolysis rate. Involved in the addition of a carboxymethylaminomethyl (cmnm) group at the wobble position (U34) of certain tRNAs, forming tRNA-cmnm(5)s(2)U34. The protein is tRNA modification GTPase MnmE of Bacillus cereus (strain ZK / E33L).